A 446-amino-acid chain; its full sequence is Adenylosuccinate synthetase (446 aa).

GTP is bound by residues 20 to 26 (GDEGKGK) and 48 to 50 (GHT). Asp-21 serves as the catalytic Proton acceptor. Mg(2+) contacts are provided by Asp-21 and Gly-48. IMP is bound by residues 21–24 (DEGK), 46–49 (NAGH), Thr-137, Arg-151, Gln-232, Thr-247, and Arg-319. The active-site Proton donor is His-49. Position 315–321 (315–321 (SVTGRPR)) interacts with substrate. GTP contacts are provided by residues Arg-321, 347-349 (KLD), and 429-431 (STG).

This sequence belongs to the adenylosuccinate synthetase family. Homodimer. It depends on Mg(2+) as a cofactor.

Its subcellular location is the cytoplasm. It catalyses the reaction IMP + L-aspartate + GTP = N(6)-(1,2-dicarboxyethyl)-AMP + GDP + phosphate + 2 H(+). It functions in the pathway purine metabolism; AMP biosynthesis via de novo pathway; AMP from IMP: step 1/2. Plays an important role in the de novo pathway of purine nucleotide biosynthesis. Catalyzes the first committed step in the biosynthesis of AMP from IMP. The chain is Adenylosuccinate synthetase from Ralstonia nicotianae (strain ATCC BAA-1114 / GMI1000) (Ralstonia solanacearum).